The primary structure comprises 873 residues: DNA mismatch repair protein MutS (873 aa).

Residue 625 to 632 (GPNMGGKS) participates in ATP binding.

It belongs to the DNA mismatch repair MutS family.

Functionally, this protein is involved in the repair of mismatches in DNA. It is possible that it carries out the mismatch recognition step. This protein has a weak ATPase activity. This is DNA mismatch repair protein MutS from Xanthomonas campestris pv. campestris (strain 8004).